The chain runs to 373 residues: MSDNSKTRVVVGMSGGVDSSVTALLLKEQGYDVIGIFMKNWDDTDENGVCTATEDYKDVVAVADQIGIPYYSVNFEKEYWDRVFEYFLAEYRAGRTPNPDVMCNKEIKFKAFLDYAMTLGADYVATGHYARVVRDEDGTVHMLRGVDNGKDQTYFLSQLSQEQLQKTMFPLGHLEKPEVRKLAEEAGLSTAKKKDSTGICFIGEKNFKNFLSNYLPAQPGRMMTVDGRDMGEHAGLMYYTIGQRGGLGIGGQHGGDNAPWFVVGKDLSKNILYVGQGFYHDSLMSTSLEASQVHFTRDMPEEFTLECTAKFRYRQPDSKVTVHVKGDKAEVIFAEPQRAITPGQAVVFYDGEECLGGGLIDNAYRDGQVCQYI.

ATP-binding positions include 12-19 (GMSGGVDS) and methionine 38. An interaction with target base in tRNA region spans residues 98–100 (NPD). The active-site Nucleophile is cysteine 103. An intrachain disulfide couples cysteine 103 to cysteine 200. An ATP-binding site is contributed by glycine 127. The tract at residues 150–152 (KDQ) is interaction with tRNA. Cysteine 200 functions as the Cysteine persulfide intermediate in the catalytic mechanism. An interaction with tRNA region spans residues 312–313 (RY).

Belongs to the MnmA/TRMU family.

The protein resides in the cytoplasm. The enzyme catalyses S-sulfanyl-L-cysteinyl-[protein] + uridine(34) in tRNA + AH2 + ATP = 2-thiouridine(34) in tRNA + L-cysteinyl-[protein] + A + AMP + diphosphate + H(+). Catalyzes the 2-thiolation of uridine at the wobble position (U34) of tRNA, leading to the formation of s(2)U34. The polypeptide is tRNA-specific 2-thiouridylase MnmA (Streptococcus pneumoniae (strain 70585)).